Consider the following 307-residue polypeptide: Fructokinase (307 aa).

This sequence belongs to the carbohydrate kinase PfkB family.

It carries out the reaction D-fructose + ATP = D-fructose 6-phosphate + ADP + H(+). Involved in sucrose metabolism. The sequence is that of Fructokinase (scrK) from Klebsiella pneumoniae.